The chain runs to 928 residues: DNA ligase 4 (928 aa).

ATP-binding residues include E302, K304, R309, E362, F409, E469, K474, K492, and K494. K304 serves as the catalytic N6-AMP-lysine intermediate. E362 contacts Mg(2+). E469 contributes to the Mg(2+) binding site. BRCT domains are found at residues 673 to 769 (VESD…PYFI) and 821 to 927 (PWIY…DYKF).

The protein belongs to the ATP-dependent DNA ligase family. The cofactor is Mg(2+).

The protein resides in the nucleus. It catalyses the reaction ATP + (deoxyribonucleotide)n-3'-hydroxyl + 5'-phospho-(deoxyribonucleotide)m = (deoxyribonucleotide)n+m + AMP + diphosphate.. In terms of biological role, DNA ligase involved in DNA non-homologous end joining (NHEJ); required for double-strand break (DSB) repair. Not required for the repair of DSBs induced by ionizing radiation or UV light. Has an important role in morphogenesis, positively affecting the capacity to form hyphae. In Candida albicans (strain SC5314 / ATCC MYA-2876) (Yeast), this protein is DNA ligase 4 (LIG4).